The sequence spans 2364 residues: Spectrin beta chain, non-erythrocytic 1 (2364 aa).

An N-acetylthreonine modification is found at Thr-2. Residues 2-275 are actin-binding; the sequence is TTTVATDYDN…IITYVVTYYH (274 aa). A phosphoserine mark is found at Ile-14 and Ser-36. Calponin-homology (CH) domains lie at 54–158 and 173–278; these read AVQK…LRFQ and KSAK…HYFS. Residue Lys-90 is modified to N6-acetyllysine. Ser-228 carries the post-translational modification Phosphoserine. Spectrin repeat units follow at residues 303–411, 423–525, 530–636, 639–742, 745–847, 850–952, 957–1060, 1063–1166, 1170–1258, 1276–1376, 1381–1482, 1486–1590, 1592–1696, 1698–1801, and 1805–1907; these read MIEK…LALR, LARR…QRLE, LQKI…RLEE, RLWK…RLEE, LLHQ…ALQD, ALYK…DALL, IQNY…SLGE, KLQQ…NLLS, AYQQ…DRHR, DLQK…AQRL, KAEL…HNLL, EIHQ…RLEE, HRAQ…KLDE, HRLF…TQIL, and YELH…RVRL. A phosphoserine mark is found at Ser-817, Ser-825, Ser-903, Ser-1057, Ser-1076, Ser-1079, and Ser-1237. Ser-1388, Ser-1447, and Ser-1557 each carry phosphoserine. Residues 1563–2093 form an interaction with ANK2 region; it reads IRQRLADLKQ…LLEVRRQQEE (531 aa). Position 1805 is a phosphotyrosine (Tyr-1805). Lys-1815, Lys-1913, and Lys-1989 each carry N6-acetyllysine. 2 Spectrin repeats span residues 1914 to 2014 and 2018 to 2097; these read FRFF…EWLR and EVHQ…EERK. Residues 2089–2196 form a disordered region; the sequence is RQQEEEERKR…TLPARTQETP (108 aa). Ser-2102, Ser-2128, and Ser-2138 each carry phosphoserine. Polar residues predominate over residues 2115–2131; the sequence is SQQQWDTSKGEQVSQNG. A compositionally biased stretch (polar residues) spans 2145–2166; it reads VDTSEMVNGATEQRTSSKESSP. Thr-2147 carries the phosphothreonine modification. Phosphoserine is present on Ser-2148. Positions 2149–2177 are mediates interaction with CAMSAP1; the sequence is EMVNGATEQRTSSKESSPIPSPTSDRKAK. Thr-2159 bears the Phosphothreonine mark. Phosphoserine occurs at positions 2160, 2161, 2164, 2165, and 2169. Residue Thr-2171 is modified to Phosphothreonine. 2 positions are modified to phosphoserine: Ser-2172 and Ser-2184. The segment covering 2184-2196 has biased composition (polar residues); the sequence is SAATLPARTQETP. Residues Thr-2187 and Thr-2195 each carry the phosphothreonine modification. The PH domain maps to 2197-2307; it reads SAQMEGFLNR…WIQAISSAIS (111 aa). A disordered region spans residues 2309–2364; sequence DKHEVSASTQSTPASSRAQTLPTSVVTITSESSPGKREKDKEKDKEKRFSLFGKKK. Ser-2314 and Ser-2319 each carry phosphoserine. Positions 2314–2341 are enriched in polar residues; the sequence is SASTQSTPASSRAQTLPTSVVTITSESS. At Thr-2320 the chain carries Phosphothreonine. A glycan (O-linked (GlcNAc) serine) is linked at Ser-2324. Thr-2328 carries the post-translational modification Phosphothreonine. A phosphoserine mark is found at Ser-2340 and Ser-2341. Residues 2342–2357 are compositionally biased toward basic and acidic residues; sequence PGKREKDKEKDKEKRF.

This sequence belongs to the spectrin family. As to quaternary structure, interacts with CAMSAP1. Interacts with ANK2. Interacts with CPNE4 (via VWFA domain). Like erythrocyte spectrin, the spectrin-like proteins are capable to form dimers which can further associate to tetramers. Can form heterodimers with SPTAN1. Isoform Short cannot bind to the axonal protein fodaxin. In terms of tissue distribution, isoform 2 is present in brain, lung and kidney (at protein level).

Its subcellular location is the cytoplasm. It is found in the cytoskeleton. The protein localises to the myofibril. It localises to the sarcomere. The protein resides in the m line. Its subcellular location is the cytosol. It is found in the cell membrane. In terms of biological role, fodrin, which seems to be involved in secretion, interacts with calmodulin in a calcium-dependent manner and is thus candidate for the calcium-dependent movement of the cytoskeleton at the membrane. Plays a critical role in central nervous system development and function. The chain is Spectrin beta chain, non-erythrocytic 1 (SPTBN1) from Homo sapiens (Human).